Consider the following 114-residue polypeptide: Kita-kyushu lung cancer antigen 1 homolog (114 aa).

The Cytoplasmic portion of the chain corresponds to 1 to 4 (MNVY). A helical; Signal-anchor for type II membrane protein membrane pass occupies residues 5–22 (LLLASGILCALMTVFWKY). At 23–114 (RRFQRNTGEM…RSASAHRKST (92 aa)) the chain is on the extracellular side. Asn84 is a glycosylation site (N-linked (GlcNAc...) asparagine).

It localises to the cell membrane. This Macaca fascicularis (Crab-eating macaque) protein is Kita-kyushu lung cancer antigen 1 homolog (CT83).